The following is a 98-amino-acid chain: NADH-ubiquinone oxidoreductase chain 4L (98 aa).

The next 3 membrane-spanning stretches (helical) occupy residues 1-21, 29-49, and 61-81; these read MSMV…GLLM, SLLC…ITIM, and IILL…LVMI.

It belongs to the complex I subunit 4L family. As to quaternary structure, core subunit of respiratory chain NADH dehydrogenase (Complex I) which is composed of 45 different subunits.

Its subcellular location is the mitochondrion inner membrane. It catalyses the reaction a ubiquinone + NADH + 5 H(+)(in) = a ubiquinol + NAD(+) + 4 H(+)(out). Functionally, core subunit of the mitochondrial membrane respiratory chain NADH dehydrogenase (Complex I) which catalyzes electron transfer from NADH through the respiratory chain, using ubiquinone as an electron acceptor. Part of the enzyme membrane arm which is embedded in the lipid bilayer and involved in proton translocation. The protein is NADH-ubiquinone oxidoreductase chain 4L (MT-ND4L) of Procyon lotor (Raccoon).